Reading from the N-terminus, the 723-residue chain is PX domain-containing protein EREL1 (723 aa).

The segment covering 1-12 (MMQRRSPPKHRH) has biased composition (basic residues). Positions 1 to 26 (MMQRRSPPKHRHDGTSPLPLGMDWSP) are disordered. Residues 48 to 165 (YCVTIPSWIV…SFLELEAAAR (118 aa)) enclose the PX domain. 2 disordered regions span residues 169–193 (QDVD…MVHP) and 209–230 (YGSD…QDDI). The segment covering 172–193 (DQNASDSNNDRSSTSSSPMVHP) has biased composition (low complexity). Residues 209–225 (YGSDTAYETSEVGSPSV) are compositionally biased toward polar residues. Coiled-coil stretches lie at residues 401 to 474 (NERL…LRQK) and 503 to 555 (KHVL…LEKE). A disordered region spans residues 698-723 (DVKTTEDVNEENSDEKDEASRETLKR). Positions 704 to 714 (DVNEENSDEKD) are enriched in acidic residues.

It is found in the cytoplasm. The protein localises to the cytosol. It localises to the endosome membrane. Acts as an effector of RABF2A and RABF2B. Involved in vacuolar transport of storage proteins. Regulates membrane trafficking to protein storage vacuoles (PSVs). Binds specifically to phosphatidylinositol 3-monophosphate (PtdIns3P). This is PX domain-containing protein EREL1 from Arabidopsis thaliana (Mouse-ear cress).